Reading from the N-terminus, the 397-residue chain is MERFKKASSIIETLKQQGHEAYFVGGSVRDLIIDRPIGDIDIATSALPEEVMAIFPRNVPVGLEHGTVIVLENGEPYEVTTFRTESEYEDFRRPSSVQFVRSLEEDLKRRDFTMNAIAMTEEGEMVDLFAGQEAIQQREIVTVGNAADRFQEDALRMMRGIRFVSALGFSLETKTKQAIETYGHLLEHIAIERITVEFEKLLTGTYCVKGLKELVETKLFSHLPYLQMSEERLLKATQYKWDSFETDIEAWAFFLYCIGEEHPSVFLRQWKFSNKKIKDIVAVLLAIRTRKEKDWDTVLLYKTGIYIAEMAERVYEAMIESYNPTSVKRVQSMFHALPIQGRQEMNVTGNDLLNWANKKPGPWVADMLQKIEEAIVKGNVVNEKERIREWLQGCNLL.

The ATP site is built by Gly26 and Arg29. Residues Gly26 and Arg29 each contribute to the CTP site. Residues Asp39 and Asp41 each coordinate Mg(2+). Residues Arg110, Asp153, Arg156, Arg159, and Arg162 each contribute to the ATP site. Arg110, Asp153, Arg156, Arg159, and Arg162 together coordinate CTP.

This sequence belongs to the tRNA nucleotidyltransferase/poly(A) polymerase family. Bacterial CCA-adding enzyme type 3 subfamily. Homodimer. The cofactor is Mg(2+).

The enzyme catalyses a tRNA precursor + 2 CTP + ATP = a tRNA with a 3' CCA end + 3 diphosphate. The catalysed reaction is a tRNA with a 3' CCA end + 2 CTP + ATP = a tRNA with a 3' CCACCA end + 3 diphosphate. Its function is as follows. Catalyzes the addition and repair of the essential 3'-terminal CCA sequence in tRNAs without using a nucleic acid template. Adds these three nucleotides in the order of C, C, and A to the tRNA nucleotide-73, using CTP and ATP as substrates and producing inorganic pyrophosphate. tRNA 3'-terminal CCA addition is required both for tRNA processing and repair. Also involved in tRNA surveillance by mediating tandem CCA addition to generate a CCACCA at the 3' terminus of unstable tRNAs. While stable tRNAs receive only 3'-terminal CCA, unstable tRNAs are marked with CCACCA and rapidly degraded. The polypeptide is CCA-adding enzyme (Bacillus cereus (strain G9842)).